We begin with the raw amino-acid sequence, 208 residues long: MRLAVPVSGSTPKTRLASVLSPDERRDFTEAMLADVVDAVTSAGHEPEVISTAPLDCAVPVTVDDRGLDPLVNDLLASTVTDDEGALAVVMADLPLVTRESIERLLAPEADVVLAPGLGGGTNAFVCRHPEFRVDYHGASIRDHRETARDVGASVTEVDSRRLATDIDEPDDLAEVLLHSDGAAADWLKQSGFELTATGGRVDVERFR.

Belongs to the CofC family. As to quaternary structure, homodimer.

The catalysed reaction is (2S)-2-phospholactate + GTP + H(+) = (2S)-lactyl-2-diphospho-5'-guanosine + diphosphate. It participates in cofactor biosynthesis; coenzyme F420 biosynthesis. In terms of biological role, guanylyltransferase that catalyzes the activation of (2S)-2-phospholactate (2-PL) as (2S)-lactyl-2-diphospho-5'-guanosine, via the condensation of 2-PL with GTP. It is involved in the biosynthesis of coenzyme F420, a hydride carrier cofactor. In Haloarcula marismortui (strain ATCC 43049 / DSM 3752 / JCM 8966 / VKM B-1809) (Halobacterium marismortui), this protein is 2-phospho-L-lactate guanylyltransferase.